The sequence spans 689 residues: 7SK snRNA methylphosphate capping enzyme (689 aa).

N-acetylmethionine is present on methionine 1. The span at 1–10 (MIEMAAEKEP) shows a compositional bias: basic and acidic residues. The segment at 1–167 (MIEMAAEKEP…GGGGFKHPAF (167 aa)) is disordered. The span at 52 to 84 (GRCAPSAGSPAAAVGRESPGAAATSSSGPQAQQ) shows a compositional bias: low complexity. A phosphoserine mark is found at serine 57, serine 60, serine 69, and serine 101. Arginine 117 is modified (omega-N-methylarginine). Phosphoserine occurs at positions 152, 175, and 179. Threonine 213 bears the Phosphothreonine mark. Phosphoserine is present on residues serine 216, serine 217, and serine 254. The segment covering 258 to 269 (TGRKRHRHRGQH) has biased composition (basic residues). Residues 258 to 314 (TGRKRHRHRGQHHQQQQAAGGSESHPVPPTAPLTPLLHGEGASQQPRHRGQNRDAPQ) are disordered. Residue threonine 291 is modified to Phosphothreonine. A phosphoserine mark is found at serine 330 and serine 344. The segment at 332–407 (LPSALQGPSG…HHPLPAAGFK (76 aa)) is disordered. The segment covering 338–359 (GPSGSLSAPPAASVISAPPSSS) has biased composition (low complexity). Residues 360 to 369 (SRHRKRRRTS) are compositionally biased toward basic residues. Serine 390 is subject to Phosphoserine. S-adenosyl-L-methionine contacts are provided by residues tyrosine 422, arginine 433, 451 to 453 (GCN), 474 to 475 (DI), 559 to 560 (NY), and leucine 581. The 256-residue stretch at 431–686 (DGRLRVLKPE…PVYLFHKARS (256 aa)) folds into the Bin3-type SAM domain. Residue lysine 643 forms a Glycyl lysine isopeptide (Lys-Gly) (interchain with G-Cter in SUMO2) linkage.

It belongs to the methyltransferase superfamily. As to quaternary structure, core component of the 7SK RNP complex, at least composed of 7SK RNA, LARP7, MEPCE, HEXIM1 (or HEXIM2) and P-TEFb (composed of CDK9 and CCNT1/cyclin-T1). Interacts with METTL16. Interacts with RBM7; upon genotoxic stress this interaction is enhanced, triggering the release of inactive P-TEFb complex from the core, yielding to P-TEFb complex activation. Dephosphorylated at Ser-152 by the PNUTS-PP1 complex, promoting RNA polymerase II transcription pause-release. In terms of tissue distribution, expressed in chronic myeloid leukemia cells, adrenal gland, brain, cerebellum, kidney, lung, mammary gland and testis. Weakly or not expressed in other tissues.

It is found in the nucleus. The enzyme catalyses a 5'-end triphospho-guanosine-ribonucleotide-snRNA + S-adenosyl-L-methionine = a 5'-end methyltriphosphate-guanosine-ribonucleotide-snRNA + S-adenosyl-L-homocysteine. In terms of biological role, S-adenosyl-L-methionine-dependent methyltransferase that adds a methylphosphate cap at the 5'-end of 7SK snRNA (7SK RNA), leading to stabilize it. Also has a non-enzymatic function as part of the 7SK RNP complex: the 7SK RNP complex sequesters the positive transcription elongation factor b (P-TEFb) in a large inactive 7SK RNP complex preventing RNA polymerase II phosphorylation and subsequent transcriptional elongation. The 7SK RNP complex also promotes snRNA gene transcription by RNA polymerase II via interaction with the little elongation complex (LEC). In the 7SK RNP complex, MEPCE is required to stabilize 7SK RNA and facilitate the assembly of 7SK RNP complex. MEPCE has a non-enzymatic function in the 7SK RNP complex; interaction with LARP7 within the 7SK RNP complex occluding its catalytic center. Also required for stability of U6 snRNAs. This chain is 7SK snRNA methylphosphate capping enzyme, found in Homo sapiens (Human).